The chain runs to 279 residues: Protein gustavus (279 aa).

Residues 36 to 233 (PARIDILLDM…ITMRYIGGLD (198 aa)) form the B30.2/SPRY domain. In terms of domain architecture, SOCS box spans 234–279 (PEPLPLMDLCRRTIRQKIGRTNLEEHIQQLQLPLSMKTYLLYKNRR). The segment at 236-279 (PLPLMDLCRRTIRQKIGRTNLEEHIQQLQLPLSMKTYLLYKNRR) is involved in binding to the Elongin BC complex.

Belongs to the SPSB family. Interacts (via B30.2/SPRY domain) with vas; this interaction may be necessary for the transport of vas to the posterior pole of the oocyte. Interacts with Cul-5. May associate with the Elongin BC complex composed of Elongin-B and Elongin-C. As to expression, expressed in ovaries, primarily in nurse cells and oocytes (at protein level).

It localises to the cytoplasm. The protein resides in the nucleus. In terms of biological role, involved in the localization of vas to the posterior pole of the oocyte. Required maternally in the germ line for efficient primordial germ cell formation. The sequence is that of Protein gustavus (gus) from Drosophila melanogaster (Fruit fly).